The primary structure comprises 511 residues: 2,3-bisphosphoglycerate-independent phosphoglycerate mutase (511 aa).

Residue Asp12 coordinates Mn(2+). At Tyr36 the chain carries Phosphotyrosine. Residue Ser62 coordinates Mn(2+). Ser62 functions as the Phosphoserine intermediate in the catalytic mechanism. Substrate-binding positions include His123, 153–154 (RD), Arg185, Arg191, 261–264 (RPDR), and Lys336. 5 residues coordinate Mn(2+): Asp403, His407, Asp444, His445, and His462.

It belongs to the BPG-independent phosphoglycerate mutase family. Monomer. Mn(2+) is required as a cofactor.

The enzyme catalyses (2R)-2-phosphoglycerate = (2R)-3-phosphoglycerate. It functions in the pathway carbohydrate degradation; glycolysis; pyruvate from D-glyceraldehyde 3-phosphate: step 3/5. Its activity is regulated as follows. Could be inhibited during sporulation by acidification of the forespore, thus allowing accumulation of the spore's large depot of 3-phosphoglyceric acid. Its function is as follows. Essential for rapid growth and for sporulation. Catalyzes the interconversion of 2-phosphoglycerate (2-PGA) and 3-phosphoglycerate (3-PGA). This is 2,3-bisphosphoglycerate-independent phosphoglycerate mutase from Geobacillus stearothermophilus (Bacillus stearothermophilus).